The primary structure comprises 41 residues: MKIRNSLKSLRGRHRDNQLVRRKGRVYVINKTQKRYKARQG.

Positions 1-21 (MKIRNSLKSLRGRHRDNQLVR) are disordered.

This sequence belongs to the bacterial ribosomal protein bL36 family.

The protein is Large ribosomal subunit protein bL36 of Methylobacterium sp. (strain 4-46).